We begin with the raw amino-acid sequence, 467 residues long: Glutamate--tRNA ligase (467 aa).

The 'HIGH' region signature appears at 12-22 (PSPTGYLHIGG). A compositionally biased stretch (basic and acidic residues) spans 114 to 128 (EQEAKKEKPRYDGRW). The interval 114–140 (EQEAKKEKPRYDGRWRPAPGKTLPTPP) is disordered. Residues 244–248 (KLSKR) carry the 'KMSKS' region motif. Lys247 provides a ligand contact to ATP.

It belongs to the class-I aminoacyl-tRNA synthetase family. Glutamate--tRNA ligase type 1 subfamily. As to quaternary structure, monomer.

It is found in the cytoplasm. The enzyme catalyses tRNA(Glu) + L-glutamate + ATP = L-glutamyl-tRNA(Glu) + AMP + diphosphate. In terms of biological role, catalyzes the attachment of glutamate to tRNA(Glu) in a two-step reaction: glutamate is first activated by ATP to form Glu-AMP and then transferred to the acceptor end of tRNA(Glu). The sequence is that of Glutamate--tRNA ligase from Azoarcus sp. (strain BH72).